We begin with the raw amino-acid sequence, 869 residues long: Aminopeptidase N (869 aa).

Substrate-binding positions include E122 and 262 to 266 (GAMEN). H298 is a Zn(2+) binding site. Catalysis depends on E299, which acts as the Proton acceptor. Positions 302 and 321 each coordinate Zn(2+).

The protein belongs to the peptidase M1 family. It depends on Zn(2+) as a cofactor.

It localises to the cell inner membrane. The catalysed reaction is Release of an N-terminal amino acid, Xaa-|-Yaa- from a peptide, amide or arylamide. Xaa is preferably Ala, but may be most amino acids including Pro (slow action). When a terminal hydrophobic residue is followed by a prolyl residue, the two may be released as an intact Xaa-Pro dipeptide.. Functionally, aminopeptidase N is involved in the degradation of intracellular peptides generated by protein breakdown during normal growth as well as in response to nutrient starvation. This is Aminopeptidase N (pepN) from Haemophilus influenzae (strain ATCC 51907 / DSM 11121 / KW20 / Rd).